We begin with the raw amino-acid sequence, 371 residues long: tRNA-specific 2-thiouridylase MnmA (371 aa).

ATP contacts are provided by residues 14–21 (GMSGGVDS) and methionine 40. Residues 100-102 (NPD) are interaction with target base in tRNA. Cysteine 105 serves as the catalytic Nucleophile. An intrachain disulfide couples cysteine 105 to cysteine 205. ATP is bound at residue glycine 129. An interaction with tRNA region spans residues 155-157 (KDQ). The active-site Cysteine persulfide intermediate is the cysteine 205. The segment at 321 to 322 (RY) is interaction with tRNA.

The protein belongs to the MnmA/TRMU family.

The protein resides in the cytoplasm. The catalysed reaction is S-sulfanyl-L-cysteinyl-[protein] + uridine(34) in tRNA + AH2 + ATP = 2-thiouridine(34) in tRNA + L-cysteinyl-[protein] + A + AMP + diphosphate + H(+). Functionally, catalyzes the 2-thiolation of uridine at the wobble position (U34) of tRNA, leading to the formation of s(2)U34. This chain is tRNA-specific 2-thiouridylase MnmA, found in Bordetella parapertussis (strain 12822 / ATCC BAA-587 / NCTC 13253).